Reading from the N-terminus, the 87-residue chain is MNLEPPKAEIRSATRVMGGPVTPRKGPPKFKQRQTRQFKSKPPKKGVQGFGDDIPGMEGLGTDITVICPWEAFNHLELHELAQYGII.

An N-acetylmethionine modification is found at Met1. The segment covering 1–12 (MNLEPPKAEIRS) has biased composition (basic and acidic residues). The segment at 1–55 (MNLEPPKAEIRSATRVMGGPVTPRKGPPKFKQRQTRQFKSKPPKKGVQGFGDDIP) is disordered. Over residues 26–44 (GPPKFKQRQTRQFKSKPPK) the composition is skewed to basic residues.

It belongs to the rod/cone cGMP-PDE gamma subunit family. As to quaternary structure, oligomer composed of two catalytic chains (alpha and beta), an inhibitory chain (gamma) and the delta chain.

The catalysed reaction is 3',5'-cyclic GMP + H2O = GMP + H(+). Participates in processes of transmission and amplification of the visual signal. cGMP-PDEs are the effector molecules in G-protein-mediated phototransduction in vertebrate rods and cones. This chain is Retinal rod rhodopsin-sensitive cGMP 3',5'-cyclic phosphodiesterase subunit gamma (PDE6G), found in Bos taurus (Bovine).